Consider the following 201-residue polypeptide: Ribonuclease HII (201 aa).

The RNase H type-2 domain maps to 15–201; it reads AIIAGVDEAG…FAPIKAYGAP (187 aa). A divalent metal cation is bound by residues Asp-21, Glu-22, and Asp-113.

This sequence belongs to the RNase HII family. Mn(2+) serves as cofactor. Requires Mg(2+) as cofactor.

The protein localises to the cytoplasm. The catalysed reaction is Endonucleolytic cleavage to 5'-phosphomonoester.. In terms of biological role, endonuclease that specifically degrades the RNA of RNA-DNA hybrids. This is Ribonuclease HII from Bordetella pertussis (strain Tohama I / ATCC BAA-589 / NCTC 13251).